Consider the following 433-residue polypeptide: Mblk-1-related factor 1 (433 aa).

Positions 145–197 (NKSNILRRNYTVEDLTQAVEDIRQGKLGTRRASVVYGIPRSTLRNKIYKLEAE) constitute an HTH psq-type 1 domain. The segment at residues 173 to 193 (TRRASVVYGIPRSTLRNKIYK) is a DNA-binding region (H-T-H motif). Residues 235–254 (GNQSDSSSSSPHASMCPSSP) show a composition bias toward low complexity. Disordered stretches follow at residues 235–278 (GNQS…SCSP) and 304–338 (ANIS…PKRG). The span at 304 to 319 (ANISNVDTHTPTPISE) shows a compositional bias: polar residues. Residues 320-332 (KSQKMHGNEEWKR) are compositionally biased toward basic and acidic residues. The 53-residue stretch at 334–386 (RPKRGQYRKYDKNALDEAVRSVRRGEMTVHRAGSFFGVPHSTLEYKVKERNLM) folds into the HTH psq-type 2 domain. The segment at residues 362-382 (VHRAGSFFGVPHSTLEYKVKE) is a DNA-binding region (H-T-H motif). A disordered region spans residues 393–433 (LYSHDSSTSEDGSQLVTSTISEKSDSSSHTSTPIPFPISLV). The segment covering 396–408 (HDSSTSEDGSQLV) has biased composition (polar residues). Residues 409–424 (TSTISEKSDSSSHTST) show a composition bias toward low complexity.

As to expression, expressed in AIM, RIC, AIZ, ADF, ADL, ASK, AWA, AUA, AIN, RIH (or RIR) and RIF head neurons and, in PVP, PVQ and DVA (or DVC) tail neurons, some intestinal cells, somatic gonad and vulva.

The protein localises to the nucleus. May act as transcription activator. Plays a role in neurogenesis by regulating neurite pruning between left and right AIM neurons and left and right RIF neurons during larval development. Regulates olfactory plasticity. The chain is Mblk-1-related factor 1 from Caenorhabditis elegans.